Here is a 745-residue protein sequence, read N- to C-terminus: Immunoglobulin superfamily containing leucine-rich repeat protein 2 (745 aa).

The signal sequence occupies residues 1–19; it reads MGPFGALCLAWALLGVVRA. Residues 20–51 form the LRRNT domain; that stretch reads CPEPCACVDKYAHQFADCAYKELREVPEGLPA. Residues 20–589 are Extracellular-facing; it reads CPEPCACVDK…VFSTKKELPS (570 aa). Asn52 and Asn73 each carry an N-linked (GlcNAc...) asparagine glycan. 5 LRR repeats span residues 52 to 73, 76 to 97, 100 to 123, 124 to 145, and 148 to 169; these read NVTT…AFVN, QVTS…ALAV, QLKN…RNLS, ALQL…ALGA, and DLRS…TFDA. Asn121 is a glycosylation site (N-linked (GlcNAc...) asparagine). The LRRCT domain maps to 181–232; the sequence is NPFHCSCGLVWLQAWAASTRVSLPEPDSIACASPPELQGVPVHRLPALPCAP. The Ig-like domain maps to 233–372; sequence PSVRLSAEPP…GTNSTSLRVT (140 aa). Cys260 and Cys356 form a disulfide bridge. The span at 290–300 shows a compositional bias: basic and acidic residues; it reads KEEDGGDKVED. Positions 290-328 are disordered; that stretch reads KEEDGGDKVEDGEGDGDEDLPTQTEAPTPTPAPAWPAPP. Positions 317–328 are enriched in pro residues; that stretch reads TPTPAPAWPAPP. N-linked (GlcNAc...) asparagine glycosylation is found at Asn338 and Asn365. A disordered region spans residues 376–423; sequence AGPPKHAPGTGEEPDAQVPTSERKATTKGRSNSVLPFKPEGKTKGQGL. Asn474 and Asn563 each carry an N-linked (GlcNAc...) asparagine glycan. The chain crosses the membrane as a helical span at residues 590-610; sequence LLVIVTVSVFLLVLATVPLLG. At 611–745 the chain is on the cytoplasmic side; sequence AACCHLLAKH…INGNYRQTAG (135 aa). The tract at residues 654 to 697 is disordered; that stretch reads SEKSYPARGEAGGEEPEEVPEEGLDEDVEQGDPSGDLQREESLA. Positions 665 to 683 are enriched in acidic residues; sequence GGEEPEEVPEEGLDEDVEQ. Tyr719 carries the phosphotyrosine modification. At Ser720 the chain carries Phosphoserine.

As to quaternary structure, homomultimer. Interacts with NTRK1/TrkA. As to expression, at 11.5 dpc, expressed in spinal nerves, their roots and the ventral spinal cord. At 12.5 dpc, detected in the ventral spinal cord, dorsal root ganglia (DRG), dorsal and ventral roots and sympathetic chain ganglia. At 12.5 dpc, expressed in almost all motor neurons which also express RET and in almost all DRG sensory neurons which also express NTRK1. At 18.5 dpc, expressed only in a subset of NTRK1-expressing neurons but still expressed in nearly all RET-expressing neurons.

It localises to the cell membrane. Its function is as follows. Required for axon extension during neural development. The polypeptide is Immunoglobulin superfamily containing leucine-rich repeat protein 2 (Islr2) (Mus musculus (Mouse)).